The primary structure comprises 129 residues: Small ribosomal subunit protein uS11 (129 aa).

The protein belongs to the universal ribosomal protein uS11 family. Part of the 30S ribosomal subunit. Interacts with proteins S7 and S18. Binds to IF-3.

Located on the platform of the 30S subunit, it bridges several disparate RNA helices of the 16S rRNA. Forms part of the Shine-Dalgarno cleft in the 70S ribosome. The chain is Small ribosomal subunit protein uS11 from Pseudomonas entomophila (strain L48).